Consider the following 544-residue polypeptide: Chaperonin GroEL (544 aa).

Residues 29–32, 86–90, glycine 413, 476–478, and aspartate 492 each bind ATP; these read TLGP, DGTTT, and NAA.

Belongs to the chaperonin (HSP60) family. Forms a cylinder of 14 subunits composed of two heptameric rings stacked back-to-back. Interacts with the co-chaperonin GroES.

The protein localises to the cytoplasm. Its subcellular location is the secreted. It catalyses the reaction ATP + H2O + a folded polypeptide = ADP + phosphate + an unfolded polypeptide.. Functionally, together with its co-chaperonin GroES, plays an essential role in assisting protein folding. The GroEL-GroES system forms a nano-cage that allows encapsulation of the non-native substrate proteins and provides a physical environment optimized to promote and accelerate protein folding. The chain is Chaperonin GroEL from Bacillus subtilis (strain 168).